A 524-amino-acid chain; its full sequence is Alanine aminotransferase 2 (524 aa).

Lys342 bears the N6-(pyridoxal phosphate)lysine mark.

It belongs to the class-I pyridoxal-phosphate-dependent aminotransferase family. Alanine aminotransferase subfamily. Homodimer. Pyridoxal 5'-phosphate serves as cofactor.

It carries out the reaction L-alanine + 2-oxoglutarate = pyruvate + L-glutamate. Its pathway is amino-acid degradation; L-alanine degradation via transaminase pathway; pyruvate from L-alanine: step 1/1. Its function is as follows. Catalyzes the reversible transamination between alanine and 2-oxoglutarate to form pyruvate and glutamate. The sequence is that of Alanine aminotransferase 2 (gpt2) from Xenopus tropicalis (Western clawed frog).